The primary structure comprises 319 residues: Acetyl-coenzyme A carboxylase carboxyl transferase subunit alpha (319 aa).

The region spanning 35–296 (NIDEEVHRLR…KAQLLEDLAD (262 aa)) is the CoA carboxyltransferase C-terminal domain.

The protein belongs to the AccA family. As to quaternary structure, acetyl-CoA carboxylase is a heterohexamer composed of biotin carboxyl carrier protein (AccB), biotin carboxylase (AccC) and two subunits each of ACCase subunit alpha (AccA) and ACCase subunit beta (AccD).

It is found in the cytoplasm. The enzyme catalyses N(6)-carboxybiotinyl-L-lysyl-[protein] + acetyl-CoA = N(6)-biotinyl-L-lysyl-[protein] + malonyl-CoA. Its pathway is lipid metabolism; malonyl-CoA biosynthesis; malonyl-CoA from acetyl-CoA: step 1/1. In terms of biological role, component of the acetyl coenzyme A carboxylase (ACC) complex. First, biotin carboxylase catalyzes the carboxylation of biotin on its carrier protein (BCCP) and then the CO(2) group is transferred by the carboxyltransferase to acetyl-CoA to form malonyl-CoA. The sequence is that of Acetyl-coenzyme A carboxylase carboxyl transferase subunit alpha from Salmonella agona (strain SL483).